A 1167-amino-acid polypeptide reads, in one-letter code: Tight junction protein 2 (1167 aa).

Positions 10–97 (TVTLQKDSKR…IAAIVVKRPR (88 aa)) constitute a PDZ 1 domain. 10 positions are modified to phosphoserine: Ser-107, Ser-127, Ser-130, Ser-140, Ser-145, Ser-147, Ser-173, Ser-194, Ser-205, and Ser-239. A disordered region spans residues 129–195 (RSGYSERSRH…SRERSRGRSL (67 aa)). The disordered stretch occupies residues 225–286 (SYHEAYEPDY…KGQHDPDRPI (62 aa)). A compositionally biased stretch (basic and acidic residues) spans 242–262 (YDRRAHPETRYERSRSREHLR). In terms of domain architecture, PDZ 2 spans 287 to 365 (GVLLTKSKAN…KLQLVVLRDS (79 aa)). Phosphoserine is present on residues Ser-305, Ser-378, Ser-380, Ser-386, Ser-395, Ser-404, Ser-410, and Ser-411. Positions 381 to 485 (EVEDISEIES…LRPSPEDEAI (105 aa)) are disordered. Residues 395–426 (SPEERRQQYSDQDYHSSTEKLKERPSSREETS) are compositionally biased toward basic and acidic residues. Residue Thr-435 is modified to Phosphothreonine. At Ser-479 the chain carries Phosphoserine. The PDZ 3 domain maps to 489 to 570 (NTKMVRFKKG…GETVTILAQS (82 aa)). At Tyr-554 the chain carries Phosphotyrosine. An SH3 domain is found at 584 to 649 (GDSFFIRSHF…PNKSRAEQMA (66 aa)). The region spanning 660–858 (GDRADFWRMR…WFGSLKDSIQ (199 aa)) is the Guanylate kinase-like domain. Phosphoserine is present on residues Ser-684 and Ser-884. Thr-887 bears the Phosphothreonine mark. 2 positions are modified to phosphoserine: Ser-895 and Ser-902. Disordered stretches follow at residues 904 to 1055 (FEDT…PRSV) and 1095 to 1167 (YAVP…DTEL). Phosphothreonine occurs at positions 907 and 915. Basic and acidic residues predominate over residues 938-949 (VQHEENIRKSSP). A phosphoserine mark is found at Ser-948, Ser-960, Ser-968, Ser-988, and Ser-1044. The span at 976–990 (EPPKARSQNREDSFD) shows a compositional bias: basic and acidic residues. A compositionally biased stretch (acidic residues) spans 1037–1049 (ESEEVGESTEEQE). A Phosphotyrosine modification is found at Tyr-1095. 2 positions are modified to phosphoserine: Ser-1124 and Ser-1136. Residues 1165 to 1167 (TEL) form an interaction with SCRIB region.

This sequence belongs to the MAGUK family. Homodimer. Interacts (via PDZ2 domain) with TJP1/ZO1 (via PDZ2 domain). Interacts with UBN1. Interacts with SCRIB. Interacts with OCLN. Interacts with SAFB in the nucleus. Interacts with USP53 (via the C-terminal region). Interacts with claudins, including CLDN1, CLDN2, CLDN3, CLDN5 and CLDN7. Interacts with CLDN18. Interacts (via N-terminus) with CTNNA1.

The protein resides in the cell junction. It is found in the adherens junction. It localises to the cell membrane. Its subcellular location is the nucleus. The protein localises to the tight junction. Functionally, plays a role in tight junctions and adherens junctions. Acts as a positive regulator of RANKL-induced osteoclast differentiation, potentially via mediating downstream transcriptional activity. In Mus musculus (Mouse), this protein is Tight junction protein 2.